The primary structure comprises 453 residues: Bifunctional protein GlmU (453 aa).

The segment at 1 to 226 (MVAVAILAAG…YLEITGINDR (226 aa)) is pyrophosphorylase. UDP-N-acetyl-alpha-D-glucosamine-binding positions include 7-10 (LAAG), K21, Q73, and 78-79 (GT). Position 103 (D103) interacts with Mg(2+). Residues G140, E155, N170, and N224 each coordinate UDP-N-acetyl-alpha-D-glucosamine. N224 is a binding site for Mg(2+). The segment at 227-247 (KQLAMANGILQNRVKDHWMAQ) is linker. Residues 248–453 (GVTLIDPDSI…EWKKTIESKK (206 aa)) are N-acetyltransferase. R329 and K347 together coordinate UDP-N-acetyl-alpha-D-glucosamine. H359 serves as the catalytic Proton acceptor. Residues Y362 and N373 each contribute to the UDP-N-acetyl-alpha-D-glucosamine site. Residues A376, 382 to 383 (NY), A419, and R436 each bind acetyl-CoA.

This sequence in the N-terminal section; belongs to the N-acetylglucosamine-1-phosphate uridyltransferase family. It in the C-terminal section; belongs to the transferase hexapeptide repeat family. In terms of assembly, homotrimer. Requires Mg(2+) as cofactor.

The protein resides in the cytoplasm. It catalyses the reaction alpha-D-glucosamine 1-phosphate + acetyl-CoA = N-acetyl-alpha-D-glucosamine 1-phosphate + CoA + H(+). It carries out the reaction N-acetyl-alpha-D-glucosamine 1-phosphate + UTP + H(+) = UDP-N-acetyl-alpha-D-glucosamine + diphosphate. It functions in the pathway nucleotide-sugar biosynthesis; UDP-N-acetyl-alpha-D-glucosamine biosynthesis; N-acetyl-alpha-D-glucosamine 1-phosphate from alpha-D-glucosamine 6-phosphate (route II): step 2/2. The protein operates within nucleotide-sugar biosynthesis; UDP-N-acetyl-alpha-D-glucosamine biosynthesis; UDP-N-acetyl-alpha-D-glucosamine from N-acetyl-alpha-D-glucosamine 1-phosphate: step 1/1. It participates in bacterial outer membrane biogenesis; LPS lipid A biosynthesis. Catalyzes the last two sequential reactions in the de novo biosynthetic pathway for UDP-N-acetylglucosamine (UDP-GlcNAc). The C-terminal domain catalyzes the transfer of acetyl group from acetyl coenzyme A to glucosamine-1-phosphate (GlcN-1-P) to produce N-acetylglucosamine-1-phosphate (GlcNAc-1-P), which is converted into UDP-GlcNAc by the transfer of uridine 5-monophosphate (from uridine 5-triphosphate), a reaction catalyzed by the N-terminal domain. In Rippkaea orientalis (strain PCC 8801 / RF-1) (Cyanothece sp. (strain PCC 8801)), this protein is Bifunctional protein GlmU.